The primary structure comprises 182 residues: MSRIGKKPIPVPQGVDVKINGNVISVKGPKGQLEQEFHQDMNIKLEEGNLVVERPSDAKDHRALHGLTRTLLNNMVEGVTNGFQRNLELVGVGYRAAKQGNKLVLTIGYSHPVEIEPPAGIEIEVPAATKIAIKGSDKQAVGQLAANIRAVREPEPYKGKGIKYENEIIRRKAGKAGGKGKK.

The protein belongs to the universal ribosomal protein uL6 family. Part of the 50S ribosomal subunit.

This protein binds to the 23S rRNA, and is important in its secondary structure. It is located near the subunit interface in the base of the L7/L12 stalk, and near the tRNA binding site of the peptidyltransferase center. The sequence is that of Large ribosomal subunit protein uL6 from Desulforamulus reducens (strain ATCC BAA-1160 / DSM 100696 / MI-1) (Desulfotomaculum reducens).